Consider the following 342-residue polypeptide: Methylthioribose-1-phosphate isomerase (342 aa).

Residues 49-51, arginine 86, and glutamine 187 contribute to the substrate site; that span reads RGA. Aspartate 228 serves as the catalytic Proton donor. 238-239 provides a ligand contact to substrate; sequence NK.

Belongs to the eIF-2B alpha/beta/delta subunits family. MtnA subfamily.

It catalyses the reaction 5-(methylsulfanyl)-alpha-D-ribose 1-phosphate = 5-(methylsulfanyl)-D-ribulose 1-phosphate. It functions in the pathway amino-acid biosynthesis; L-methionine biosynthesis via salvage pathway; L-methionine from S-methyl-5-thio-alpha-D-ribose 1-phosphate: step 1/6. In terms of biological role, catalyzes the interconversion of methylthioribose-1-phosphate (MTR-1-P) into methylthioribulose-1-phosphate (MTRu-1-P). The chain is Methylthioribose-1-phosphate isomerase from Klebsiella pneumoniae subsp. pneumoniae (strain ATCC 700721 / MGH 78578).